Here is a 91-residue protein sequence, read N- to C-terminus: Potassium channel toxin TdiKIK (91 aa).

A signal peptide spans 1–25 (MVATNRCCVFALLVALLLIHSLAEA). The propeptide occupies 26–44 (GKGKEVLGKIKNKLVEVKE). Residues 58–91 (EYACPVIDKFCEDHCAAKNAIGKCDDFKCQCLNS) enclose the BetaSPN-type CS-alpha/beta domain. 3 cysteine pairs are disulfide-bonded: Cys-61-Cys-81, Cys-68-Cys-86, and Cys-72-Cys-88.

Expressed by the venom gland.

The protein resides in the secreted. In terms of biological role, the full peptide presents antibacterial and cytotoxic activities. The synthetic C-terminus (AA 33-76) inhibits voltage-gated potassium channels Kv1.1/KCNA1, Kv1.2/KCNA2, and Kv1.3/KCNA3. This is Potassium channel toxin TdiKIK from Tityus discrepans (Venezuelan scorpion).